Consider the following 175-residue polypeptide: Protein-export protein SecB (175 aa).

This sequence belongs to the SecB family. Homotetramer, a dimer of dimers. One homotetramer interacts with 1 SecA dimer.

The protein resides in the cytoplasm. One of the proteins required for the normal export of preproteins out of the cell cytoplasm. It is a molecular chaperone that binds to a subset of precursor proteins, maintaining them in a translocation-competent state. It also specifically binds to its receptor SecA. This is Protein-export protein SecB from Anaplasma marginale (strain Florida).